Reading from the N-terminus, the 155-residue chain is Aspartate carbamoyltransferase regulatory chain (155 aa).

Cys112, Cys117, Cys140, and Cys143 together coordinate Zn(2+).

This sequence belongs to the PyrI family. In terms of assembly, contains catalytic and regulatory chains. Zn(2+) serves as cofactor.

Functionally, involved in allosteric regulation of aspartate carbamoyltransferase. This is Aspartate carbamoyltransferase regulatory chain from Phocaeicola vulgatus (strain ATCC 8482 / DSM 1447 / JCM 5826 / CCUG 4940 / NBRC 14291 / NCTC 11154) (Bacteroides vulgatus).